A 363-amino-acid polypeptide reads, in one-letter code: Protein MAK32 (363 aa).

This sequence to S.pombe SpAC4G8.14c.

Its function is as follows. Necessary for the structural stability of L-A double-stranded RNA-containing particles. Necessary for growth at 37 degrees Celsius as well as for maintenance of the killer plasmid. The sequence is that of Protein MAK32 (MAK32) from Saccharomyces cerevisiae (strain ATCC 204508 / S288c) (Baker's yeast).